The chain runs to 226 residues: MEADASVDMFSKVLEHQLLQTTKLVEEHLDSEIQKLDQMDEDELERLKEKRLQALRKAQQQKQEWLSKGHGEYREIPSERDFFQEVKESENVVCHFYRDSTFRCKILDRHLAILSKKHLETKFLKLNVEKAPFLCERLHIKVIPTLALLKDGKTQDYVVGFTDLGNTDDFTTETLEWRLGSSDILNYSGNLMEPPFQNQKKFGTNFTKLEKKTIRGKKYDSDSDDD.

Residues 74 to 180 form the Thioredoxin domain; it reads REIPSERDFF…TTETLEWRLG (107 aa). Ser188, Ser221, and Ser223 each carry phosphoserine.

Forms ternary complexes with the chaperonin TCP1 complex, spanning the cylindrical chaperonin cavity and contacting at least 2 subunits.

The protein resides in the cytoplasm. Its subcellular location is the nucleus. The protein localises to the cytoskeleton. It is found in the microtubule organizing center. It localises to the centrosome. The protein resides in the midbody. Functionally, significantly diminishes the chaperonin TCP1 complex ATPase activity, thus negatively impacts protein folding, including that of actin or tubulin. The chain is Thioredoxin domain-containing protein 9 (TXNDC9) from Homo sapiens (Human).